Reading from the N-terminus, the 189-residue chain is FAS1 domain-containing protein mug57 (189 aa).

A signal peptide spans 1 to 24; the sequence is MMKLFCLNIFRFLYTTSFISAVLS. The 146-residue stretch at 37 to 182 folds into the FAS1 domain; sequence EPRLFELLAE…GEMWVLNATL (146 aa).

It is found in the cytoplasm. The protein resides in the nucleus. The protein localises to the membrane. Its function is as follows. Has a role in sporulation. In Schizosaccharomyces pombe (strain 972 / ATCC 24843) (Fission yeast), this protein is FAS1 domain-containing protein mug57 (mug57).